The primary structure comprises 440 residues: Xylose isomerase (440 aa).

Catalysis depends on residues H100 and D103. Mg(2+) is bound by residues E231, E267, H270, D295, D306, D308, and D338.

It belongs to the xylose isomerase family. Homotetramer. Mg(2+) is required as a cofactor.

It is found in the cytoplasm. The catalysed reaction is alpha-D-xylose = alpha-D-xylulofuranose. The polypeptide is Xylose isomerase (Burkholderia ambifaria (strain MC40-6)).